We begin with the raw amino-acid sequence, 428 residues long: MMTYQEIFNEIKNKAYFKNHRHVLIAVSGGVDSMNLLHFLYLFQDKLKIRIGIAHVNHKQRSESDSEEAYLKCWAKKHDIPIYVSNFEGIFSEKAARDWRYAFFKSIMLKNNYSALVTAHHSDDQAETILMRLIRGSRLRHLSGIKSVQPFANGQLIRPFLTFSKKDLPEIFHFEDSSNRELSFLRNRVRNNYLPLLKQENPRFIQGLNQLALENSLLFQAFKELTNHITTTDLTEFNEQSKSIQYFLLQDYLEGFPDLDLKKSQFTQLLQIIQTAKQGYYYLKKDYYIFIDKFSFKITKIVPKTELVKEEKMLEYDSNLCYRDYYFSFMPKSNEDQGQVSIPLFSLSSIKLRSRQSGDYISFGHFSKKIRRLFIDEKFTIAERQNAIIGEQDEQIIFVLIGNKTYLRKACKHDIMLAKLYIDKLEKG.

Position 28-33 (28-33 (SGGVDS)) interacts with ATP.

It belongs to the tRNA(Ile)-lysidine synthase family.

It localises to the cytoplasm. It carries out the reaction cytidine(34) in tRNA(Ile2) + L-lysine + ATP = lysidine(34) in tRNA(Ile2) + AMP + diphosphate + H(+). Functionally, ligates lysine onto the cytidine present at position 34 of the AUA codon-specific tRNA(Ile) that contains the anticodon CAU, in an ATP-dependent manner. Cytidine is converted to lysidine, thus changing the amino acid specificity of the tRNA from methionine to isoleucine. The chain is tRNA(Ile)-lysidine synthase from Streptococcus pyogenes serotype M1.